Reading from the N-terminus, the 1050-residue chain is Calmodulin-binding transcription activator 2 (1050 aa).

Residues 15–141 constitute a DNA-binding region (CG-1); it reads IKQLLSEAQH…YLEVKGNRMS (127 aa). Polar residues-rich tracts occupy residues 141–171 and 183–196; these read STSG…SSIL and SRQA…NPEP. 2 disordered regions span residues 141-196 and 223-246; these read STSG…NPEP and NRDG…SGDV. ANK repeat units lie at residues 661 to 690 and 694 to 723; these read DGQG…SINF and NGWS…DAGA. IQ domains follow at residues 870–899 and 893–922; these read VHAA…RIVK and IRQR…SVGL. The interval 918–940 is calmodulin-binding; sequence WSVGLLEKIILRWRRKGSGLRGF. Residues 957–985 adopt a coiled-coil conformation; sequence QEDDYDFLKEGRKQTEERLQKALTRVKSM. The residue at position 984 (serine 984) is a Phosphoserine.

This sequence belongs to the CAMTA family. As to expression, expressed in roots, stems, old leaves, petals, sepals, top of carpels, stigmas, stamen filaments, anthers and siliques, but not in pollen.

It is found in the nucleus. In terms of biological role, transcription activator that binds to the DNA consensus sequence 5'-[ACG]CGCG[GTC]-3'. Regulates transcriptional activity in response to calcium signals. Binds calmodulin in a calcium-dependent manner. Involved in freezing tolerance in association with CAMTA1 and CAMTA3. Contributes together with CAMTA1 and CAMTA3 to the positive regulation of the cold-induced expression of DREB1A/CBF3, DREB1B/CBF1 and DREB1C/CBF2. Involved together with CAMTA3 and CAMTA4 in the positive regulation of a general stress response. Involved in tolerance to aluminum. Binds to the promoter of ALMT1 transporter and contributes to the positive regulation of aluminum-induced expression of ALMT1. The protein is Calmodulin-binding transcription activator 2 of Arabidopsis thaliana (Mouse-ear cress).